Here is a 214-residue protein sequence, read N- to C-terminus: Adenylate kinase (214 aa).

10 to 15 (GAGKGT) provides a ligand contact to ATP. The tract at residues 30–59 (STGDMLRAAVKAGTPLGLEAKKVMDAGQLV) is NMP. Residues threonine 31, arginine 36, 57–59 (QLV), 85–88 (GFPR), and glutamine 92 contribute to the AMP site. An LID region spans residues 122-159 (GRRVHPGSGRVYHVVFNPPKVEGKDDVTGEDLAIRPDD). Residues arginine 123 and 132 to 133 (VY) each bind ATP. 2 residues coordinate AMP: arginine 156 and arginine 167. ATP is bound at residue glutamine 200.

The protein belongs to the adenylate kinase family. In terms of assembly, monomer.

It localises to the cytoplasm. The catalysed reaction is AMP + ATP = 2 ADP. Its pathway is purine metabolism; AMP biosynthesis via salvage pathway; AMP from ADP: step 1/1. Its function is as follows. Catalyzes the reversible transfer of the terminal phosphate group between ATP and AMP. Plays an important role in cellular energy homeostasis and in adenine nucleotide metabolism. The protein is Adenylate kinase of Shewanella oneidensis (strain ATCC 700550 / JCM 31522 / CIP 106686 / LMG 19005 / NCIMB 14063 / MR-1).